The sequence spans 425 residues: AFP homolog 2 (425 aa).

2 disordered regions span residues 1–207 (MDDD…SGTE) and 288–327 (PFAGRVPSNSATAKGEGKQPVAEEGSSEDASERPTGDNSN). Residues 7–17 (LELSLGLSCGG) are necessary and sufficient for the interaction with TOPLESS. The span at 20-34 (GKAKGNNNNNAGSSS) shows a compositional bias: low complexity. Residues 37-54 (YRAEGGDRSAKVIDDFKN) are compositionally biased toward basic and acidic residues. A compositionally biased stretch (low complexity) spans 66 to 81 (PSSGSQRSDSGQQPPQ). Residues 124 to 140 (NDDKKKEKDSSHVDMHE) show a composition bias toward basic and acidic residues. Composition is skewed to polar residues over residues 146 to 158 (SHVSTATDEGSTA), 185 to 197 (TDTNIVDNLTGQR), and 288 to 299 (PFAGRVPSNSAT). Positions 322-425 (TGDNSNLNTA…MGMTAASAHT (104 aa)) are necessary and sufficient for the interaction with the JAZ proteins.

Belongs to the Ninja family. As to quaternary structure, component of a complex at least composed of TOPLESS, TPR2, TPR3, TIFY4B/PPD2, MYC3/ATR2 and TIFY3B/JAZ12. Interacts (via C-terminus) with TIFY10A/JAZ1; TIFY10B/JAZ2; TIFY6B/JAZ3; TIFY6A/JAZ4; TIFY11A/JAZ5; TIFY11B/JAZ6; TIFY7/JAZ9; TIFY9/JAZ10; TIFY3A/JAZ11; TIFY3B/JAZ12; TIFY4A/PPD1; TIFY4B/PPD2 and TIFY8 (via TIFY domain). Interacts with TOPLESS. Interacts with PAT1H1.

Its subcellular location is the nucleus. Its function is as follows. Acts as a transcriptional repressor. Negative regulator of jasmonate responses. Connects the JAZ proteins and the non-JAZ protein TIFY8 with the TOPLESS corepressors. This Arabidopsis thaliana (Mouse-ear cress) protein is AFP homolog 2.